A 219-amino-acid polypeptide reads, in one-letter code: ATP synthase subunit a (219 aa).

The next 6 membrane-spanning stretches (helical) occupy residues 16–36, 57–79, 96–116, 122–142, 158–178, and 184–204; these read LSNW…FWLI, LLMG…FILF, LAVT…YTWI, ALAH…MVLM, LAAN…QGTL, and TSIV…VAII.

It belongs to the ATPase A chain family. As to quaternary structure, F-type ATPases have 2 components, CF(1) - the catalytic core - and CF(0) - the membrane proton channel. CF(1) has five subunits: alpha(3), beta(3), gamma(1), delta(1), epsilon(1). CF(0) has three main subunits: a, b and c.

It localises to the mitochondrion inner membrane. Its function is as follows. Mitochondrial membrane ATP synthase (F(1)F(0) ATP synthase or Complex V) produces ATP from ADP in the presence of a proton gradient across the membrane which is generated by electron transport complexes of the respiratory chain. F-type ATPases consist of two structural domains, F(1) - containing the extramembraneous catalytic core and F(0) - containing the membrane proton channel, linked together by a central stalk and a peripheral stalk. During catalysis, ATP synthesis in the catalytic domain of F(1) is coupled via a rotary mechanism of the central stalk subunits to proton translocation. Key component of the proton channel; it may play a direct role in the translocation of protons across the membrane. This Artemia franciscana (Brine shrimp) protein is ATP synthase subunit a (ATP6).